Reading from the N-terminus, the 581-residue chain is NADH-quinone oxidoreductase subunit C/D (581 aa).

Positions 1–172 (MSATDLVSEL…PLFNMTAALF (172 aa)) are NADH dehydrogenase I subunit C. Positions 196–581 (ELMILNYGPH…IDYVMSDVDR (386 aa)) are NADH dehydrogenase I subunit D.

In the N-terminal section; belongs to the complex I 30 kDa subunit family. It in the C-terminal section; belongs to the complex I 49 kDa subunit family. In terms of assembly, NDH-1 is composed of 13 different subunits. Subunits NuoB, CD, E, F, and G constitute the peripheral sector of the complex.

It is found in the cell inner membrane. It catalyses the reaction a quinone + NADH + 5 H(+)(in) = a quinol + NAD(+) + 4 H(+)(out). NDH-1 shuttles electrons from NADH, via FMN and iron-sulfur (Fe-S) centers, to quinones in the respiratory chain. The immediate electron acceptor for the enzyme in this species is believed to be ubiquinone. Couples the redox reaction to proton translocation (for every two electrons transferred, four hydrogen ions are translocated across the cytoplasmic membrane), and thus conserves the redox energy in a proton gradient. The chain is NADH-quinone oxidoreductase subunit C/D from Rhodopseudomonas palustris (strain HaA2).